The primary structure comprises 187 residues: UPF0340 protein SP70585_0722 (187 aa).

Belongs to the UPF0340 family.

This Streptococcus pneumoniae (strain 70585) protein is UPF0340 protein SP70585_0722.